The primary structure comprises 200 residues: Somatotropin (200 aa).

A signal peptide spans 1 to 22; that stretch reads MARVLVVLSVVVASLFFSQGAT. Histidine 38 is a binding site for Zn(2+). A disulfide bridge links cysteine 71 with cysteine 173. Glutamate 182 is a binding site for Zn(2+). An intrachain disulfide couples cysteine 190 to cysteine 198.

Belongs to the somatotropin/prolactin family.

The protein localises to the secreted. Growth hormone plays an important role in growth control and is involved in the regulation of several anabolic processes. Implicated as an osmoregulatory substance important for seawater adaptation. In Pangasianodon gigas (Mekong giant catfish), this protein is Somatotropin (gh).